The chain runs to 573 residues: Proline--tRNA ligase (573 aa).

Belongs to the class-II aminoacyl-tRNA synthetase family. ProS type 1 subfamily. In terms of assembly, homodimer.

Its subcellular location is the cytoplasm. It catalyses the reaction tRNA(Pro) + L-proline + ATP = L-prolyl-tRNA(Pro) + AMP + diphosphate. Its function is as follows. Catalyzes the attachment of proline to tRNA(Pro) in a two-step reaction: proline is first activated by ATP to form Pro-AMP and then transferred to the acceptor end of tRNA(Pro). As ProRS can inadvertently accommodate and process non-cognate amino acids such as alanine and cysteine, to avoid such errors it has two additional distinct editing activities against alanine. One activity is designated as 'pretransfer' editing and involves the tRNA(Pro)-independent hydrolysis of activated Ala-AMP. The other activity is designated 'posttransfer' editing and involves deacylation of mischarged Ala-tRNA(Pro). The misacylated Cys-tRNA(Pro) is not edited by ProRS. The protein is Proline--tRNA ligase of Moorella thermoacetica (strain ATCC 39073 / JCM 9320).